We begin with the raw amino-acid sequence, 714 residues long: Glycine--tRNA ligase beta subunit (714 aa).

The protein belongs to the class-II aminoacyl-tRNA synthetase family. Tetramer of two alpha and two beta subunits.

It localises to the cytoplasm. It catalyses the reaction tRNA(Gly) + glycine + ATP = glycyl-tRNA(Gly) + AMP + diphosphate. The polypeptide is Glycine--tRNA ligase beta subunit (Rhodospirillum centenum (strain ATCC 51521 / SW)).